Consider the following 94-residue polypeptide: Aspartyl/glutamyl-tRNA(Asn/Gln) amidotransferase subunit C (94 aa).

Residues 72 to 94 (PREKALQGAPEVSEGQFKVPRVV) form a disordered region.

It belongs to the GatC family. In terms of assembly, heterotrimer of A, B and C subunits.

The catalysed reaction is L-glutamyl-tRNA(Gln) + L-glutamine + ATP + H2O = L-glutaminyl-tRNA(Gln) + L-glutamate + ADP + phosphate + H(+). It catalyses the reaction L-aspartyl-tRNA(Asn) + L-glutamine + ATP + H2O = L-asparaginyl-tRNA(Asn) + L-glutamate + ADP + phosphate + 2 H(+). Its function is as follows. Allows the formation of correctly charged Asn-tRNA(Asn) or Gln-tRNA(Gln) through the transamidation of misacylated Asp-tRNA(Asn) or Glu-tRNA(Gln) in organisms which lack either or both of asparaginyl-tRNA or glutaminyl-tRNA synthetases. The reaction takes place in the presence of glutamine and ATP through an activated phospho-Asp-tRNA(Asn) or phospho-Glu-tRNA(Gln). The sequence is that of Aspartyl/glutamyl-tRNA(Asn/Gln) amidotransferase subunit C from Moorella thermoacetica (strain ATCC 39073 / JCM 9320).